A 744-amino-acid polypeptide reads, in one-letter code: Integrator complex subunit 11 homolog (744 aa).

Residues His-67, His-69, Asp-71, His-72, His-156, and Asp-177 each contribute to the Zn(2+) site. The HXHXDH motif motif lies at 67 to 72 (HFHLDH). The active site involves Glu-202. Zn(2+) is bound at residue His-425. Residues 626 to 669 (NNNTSDDNNNNNNNNNNNNNNNNNNNNNNNNNNNNNNNNNNNNN) are disordered.

Belongs to the metallo-beta-lactamase superfamily. RNA-metabolizing metallo-beta-lactamase-like family. INTS11 subfamily. In terms of assembly, component of the Integrator complex. The core complex associates with protein phosphatase 2A subunits, to form the Integrator-PP2A (INTAC) complex. It depends on Zn(2+) as a cofactor.

It is found in the nucleus. The protein resides in the cytoplasm. Its function is as follows. RNA endonuclease component of the integrator complex, a multiprotein complex that terminates RNA polymerase II (Pol II) transcription in the promoter-proximal region of genes. The integrator complex provides a quality checkpoint during transcription elongation by driving premature transcription termination of transcripts that are unfavorably configured for transcriptional elongation: the complex terminates transcription by (1) catalyzing dephosphorylation of the C-terminal domain (CTD) of Pol II subunit polr2a, (2) degrading the exiting nascent RNA transcript via endonuclease activity and (3) promoting the release of Pol II from bound DNA. The integrator complex is also involved in terminating the synthesis of non-coding Pol II transcripts, such as enhancer RNAs (eRNAs), small nuclear RNAs (snRNAs), telomerase RNAs and long non-coding RNAs (lncRNAs). Within the integrator complex, INTS11 constitutes the RNA endonuclease subunit that degrades exiting nascent RNA transcripts. The protein is Integrator complex subunit 11 homolog (ints11) of Dictyostelium discoideum (Social amoeba).